Reading from the N-terminus, the 208-residue chain is Imidazoleglycerol-phosphate dehydratase (208 aa).

Positions 1-22 are disordered; it reads MTEDTETSSTGAGADDRTAAIS.

The protein belongs to the imidazoleglycerol-phosphate dehydratase family.

It is found in the cytoplasm. It carries out the reaction D-erythro-1-(imidazol-4-yl)glycerol 3-phosphate = 3-(imidazol-4-yl)-2-oxopropyl phosphate + H2O. The protein operates within amino-acid biosynthesis; L-histidine biosynthesis; L-histidine from 5-phospho-alpha-D-ribose 1-diphosphate: step 6/9. This Haloquadratum walsbyi (strain DSM 16790 / HBSQ001) protein is Imidazoleglycerol-phosphate dehydratase.